A 243-amino-acid chain; its full sequence is Type III pantothenate kinase (243 aa).

7 to 14 (DIGNTRLK) is an ATP binding site. Residues Tyr-95 and 102-105 (GIDR) each bind substrate. Catalysis depends on Asp-104, which acts as the Proton acceptor. ATP is bound at residue Thr-126. Thr-177 serves as a coordination point for substrate.

This sequence belongs to the type III pantothenate kinase family. Homodimer. The cofactor is NH4(+). Requires K(+) as cofactor.

The protein localises to the cytoplasm. The catalysed reaction is (R)-pantothenate + ATP = (R)-4'-phosphopantothenate + ADP + H(+). Its pathway is cofactor biosynthesis; coenzyme A biosynthesis; CoA from (R)-pantothenate: step 1/5. Functionally, catalyzes the phosphorylation of pantothenate (Pan), the first step in CoA biosynthesis. This is Type III pantothenate kinase from Acinetobacter baylyi (strain ATCC 33305 / BD413 / ADP1).